Here is a 596-residue protein sequence, read N- to C-terminus: MSDPCGTKPVQESNPTMSLWSLEDRHSSQGRPQPDQDPVAKEAPTSELQMKVDFFRKLGYSSSEIHSVLQKLGVQADTNTVLGELVKHGSATERECQALTAPSPQPPLVPRGGSTPKPSTLEPSLPEEDREGSDLRPVVIDGSNVAMSHGNKEVFSCRGILLAVNWFLERGHTDITVFVPSWRKEQPRPDVPITDQHILRELEKKKILVFTPSRRVGGKRVVCYDDRFIVKLAFESDGVVVSNDTYRDLQGERQEWKRFIEERLLMYSFVNDKFMPPDDPLGRHGPSLDNFLRKKPLPSEHRKQPCPYGKKCTYGIKCRFFHPERPSRPQRSVADELRANALLSPPRTPVKDKSSQRPSPASQSSSVSLEAEPGSLDGKKLGARSSPGPHREGSPQTCAPAGRSLPVSGGSFGPTEWLAHTQDSLPYTSQECLDSGIGSLESQMSELWGVRGGSPGESGPTRGPYAGYHSYGSKVPAAPSFSPFRPAMGAGHFSVPTDYVPPPPTYPSREYWSEPYPLPPPTPVLQEPQRPSPGAGGGPWGRVGDLAKERAGVYTKLCGVFPPHLVEAVMRRFPQLLDPQQLAAEILSYKSQHLSE.

2 disordered regions span residues 1–48 (MSDP…TSEL) and 97–134 (QALT…EGSD). Residues 10–19 (VQESNPTMSL) show a composition bias toward polar residues. The tract at residues 42–87 (EAPTSELQMKVDFFRKLGYSSSEIHSVLQKLGVQADTNTVLGELVK) is ubiquitin association domain. Residues 81 to 150 (VLGELVKHGS…DGSNVAMSHG (70 aa)) form a necessary for interaction with TANK region. The segment at 112 to 281 (GGSTPKPSTL…DKFMPPDDPL (170 aa)) is RNase. In terms of domain architecture, RNase NYN spans 135–290 (LRPVVIDGSN…LGRHGPSLDN (156 aa)). The interval 214–220 (RRVGGKR) is RNA binding. Asp-226 is a Mg(2+) binding site. Disordered regions lie at residues 278 to 306 (DDPL…KQPC) and 340 to 417 (NALL…PTEW). The C3H1-type zinc finger occupies 301–324 (HRKQPCPYGKKCTYGIKCRFFHPE). Residues 301–454 (HRKQPCPYGK…SELWGVRGGS (154 aa)) form a necessary for interaction with ZC3H12D region. Phosphoserine is present on Ser-344. The segment covering 356–368 (QRPSPASQSSSVS) has biased composition (low complexity). Ser-435 and Ser-439 each carry phosphoserine. A disordered region spans residues 511 to 543 (YWSEPYPLPPPTPVLQEPQRPSPGAGGGPWGRV). A compositionally biased stretch (low complexity) spans 524 to 533 (VLQEPQRPSP).

This sequence belongs to the ZC3H12 family. Oligomer. Found in a deubiquitination complex with TANK, USP10 and ZC3H12A; this complex inhibits genotoxic stress- or interleukin-1-beta-mediated NF-kappaB activation by promoting IKBKG or TRAF6 deubiquitination. Interacts with IKBKG; this interaction increases in response to DNA damage. Interacts with TANK; this interaction increases in response to DNA damage and serves as a bridge to anchor both TANK and USP10 into a deubiquitinating complex. Interacts with TRAF6; this interaction increases in response to DNA damage and is stimulated by TANK. Interacts with USP10; this interaction increases in response to DNA damage and serves as a bridge to anchor both TANK and USP10 into a deubiquitinating complex. Interacts with ZC3H12D. Interacts with TNRC6A. Interacts with IKBKB/IKKB. Interacts with IKBKB/IKKB. Interacts with IKBKB/IKKB. Interacts with BTRC; the interaction occurs when ZC3H12A is phosphorylated in a IKBKB/IKKB-dependent manner. Interacts with IRAK1; this interaction increases the interaction between ZC3H12A and IKBKB/IKKB. Interacts with UPF1; this interaction occurs in a mRNA translationally active- and termination-dependent manner and is essential for ZC3H12A-mediated degradation of target mRNAs. Associates with ribosomes. Interacts with ubiquitin. Requires Mg(2+) as cofactor. Proteolytically cleaved between Arg-111 and Arg-214 by MALT1 in activated T-cells; cleavage at Arg-111 is critical for promoting ZC3H12A degradation in response to T-cell receptor (TCR) stimulation, and hence is necessary for prolonging the stability of a set of mRNAs controlling T-cell activation and Th17 cell differentiation. In terms of processing, phosphorylated by IRAK1; phosphorylation is necessary for subsequent phosphorylation by the I-kappa-B-kinase (IKK) complex. Phosphorylated by I-kappa-B-kinases (IKKs) at Ser-435 and Ser-439 upon lipopolysaccharide (LPS) or IL1B stimulation in macrophages through the MyD88-dependent signaling pathway; these phosphorylations promote rapid ubiquitin proteasome-mediated degradation of ZC3H12A in macrophages and hence allows its target mRNAs, such as IL6, to escape from degradation and accumulate during the inflammatory response. Post-translationally, ubiquitinated; ubiquitination is induced in response to interleukin IL1 receptor stimuli in a IKBKB/IKKB and IRAK1-dependent manner, leading to proteasome-mediated degradation. Expressed in CD4(+) helper T-cells (at protein level). Highly expressed in macrophages. Expressed in lung, lymph nodes, spleen and thymus. Expressed weakly in heart. Expressed weakly in cardiomyocytes (at protein level). Expressed in spleen, lung, intestine, brown adipose tissue and thymus. Weakly expressed in the heart. Weakly expressed in cardiomyocytes.

It localises to the nucleus. It is found in the cytoplasm. Its subcellular location is the rough endoplasmic reticulum membrane. The protein resides in the cytoplasmic granule. The protein localises to the P-body. In terms of biological role, endoribonuclease involved in various biological functions such as cellular inflammatory response and immune homeostasis, glial differentiation of neuroprogenitor cells, cell death of cardiomyocytes, adipogenesis and angiogenesis. Functions as an endoribonuclease involved in mRNA decay. Modulates the inflammatory response by promoting the degradation of a set of translationally active cytokine-induced inflammation-related mRNAs, such as IL6 and IL12B, during the early phase of inflammation. Prevents aberrant T-cell-mediated immune reaction by degradation of multiple mRNAs controlling T-cell activation, such as those encoding cytokines (IL6 and IL2), cell surface receptors (ICOS, TNFRSF4 and TNFR2) and transcription factor (REL). Inhibits cooperatively with ZC3H12A the differentiation of helper T cells Th17 in lungs. They repress target mRNA encoding the Th17 cell-promoting factors IL6, ICOS, REL, IRF4, NFKBID and NFKBIZ. The cooperation requires RNA-binding by RC3H1 and the nuclease activity of ZC3H12A. Together with RC3H1, destabilizes TNFRSF4/OX40 mRNA by binding to the conserved stem loop structure in its 3'UTR. Self regulates by destabilizing its own mRNA. Cleaves mRNA harboring a stem-loop (SL), often located in their 3'-UTRs, during the early phase of inflammation in a helicase UPF1-dependent manner. Plays a role in the inhibition of microRNAs (miRNAs) biogenesis. Cleaves the terminal loop of a set of precursor miRNAs (pre-miRNAs) important for the regulation of the inflammatory response leading to their degradation, and thus preventing the biosynthesis of mature miRNAs. Also plays a role in promoting angiogenesis in response to inflammatory cytokines by inhibiting the production of antiangiogenic microRNAs via its anti-dicer RNase activity. Affects the overall ubiquitination of cellular proteins. Positively regulates deubiquitinase activity promoting the cleavage at 'Lys-48'- and 'Lys-63'-linked polyubiquitin chains on TNF receptor-associated factors (TRAFs), preventing JNK and NF-kappa-B signaling pathway activation, and hence negatively regulating macrophage-mediated inflammatory response and immune homeostasis. Induces also deubiquitination of the transcription factor HIF1A, probably leading to its stabilization and nuclear import, thereby positively regulating the expression of proangiogenic HIF1A-targeted genes. Involved in a TANK-dependent negative feedback response to attenuate NF-kappaB activation through the deubiquitination of IKBKG or TRAF6 in response to interleukin-1-beta (IL1B) stimulation or upon DNA damage. Prevents stress granules (SGs) formation and promotes macrophage apoptosis under stress conditions, including arsenite-induced oxidative stress, heat shock, and energy deprivation. Plays a role in the regulation of macrophage polarization; promotes IL4-induced polarization of macrophages M1 into anti-inflammatory M2 state. May also act as a transcription factor that regulates the expression of multiple genes involved in inflammatory response, angiogenesis, adipogenesis and apoptosis. Functions as a positive regulator of glial differentiation of neuroprogenitor cells through an amyloid precursor protein (APP)-dependent signaling pathway. Attenuates septic myocardial contractile dysfunction in response to lipopolysaccharide (LPS) by reducing I-kappa-B-kinase (IKK)-mediated NF-kappa-B activation, and hence myocardial pro-inflammatory cytokine production. The protein is Endoribonuclease ZC3H12A of Mus musculus (Mouse).